The chain runs to 157 residues: 6,7-dimethyl-8-ribityllumazine synthase (157 aa).

Residues F22, 56–58, and 81–83 each bind 5-amino-6-(D-ribitylamino)uracil; these read AFE and VLI. Residue 86-87 coordinates (2S)-2-hydroxy-3-oxobutyl phosphate; sequence ET. H89 (proton donor) is an active-site residue. 5-amino-6-(D-ribitylamino)uracil is bound at residue F114. Residue R128 participates in (2S)-2-hydroxy-3-oxobutyl phosphate binding.

The protein belongs to the DMRL synthase family.

It catalyses the reaction (2S)-2-hydroxy-3-oxobutyl phosphate + 5-amino-6-(D-ribitylamino)uracil = 6,7-dimethyl-8-(1-D-ribityl)lumazine + phosphate + 2 H2O + H(+). It participates in cofactor biosynthesis; riboflavin biosynthesis; riboflavin from 2-hydroxy-3-oxobutyl phosphate and 5-amino-6-(D-ribitylamino)uracil: step 1/2. Catalyzes the formation of 6,7-dimethyl-8-ribityllumazine by condensation of 5-amino-6-(D-ribitylamino)uracil with 3,4-dihydroxy-2-butanone 4-phosphate. This is the penultimate step in the biosynthesis of riboflavin. The protein is 6,7-dimethyl-8-ribityllumazine synthase of Chlamydia muridarum (strain MoPn / Nigg).